Reading from the N-terminus, the 243-residue chain is Protein DMP8 (243 aa).

The segment at 1-37 (MEKTEESVGIRVYTTTTTQNPSPTSSRSPKPVPLSSL) is disordered. Over residues 14–29 (TTTTTQNPSPTSSRSP) the composition is skewed to low complexity. 4 helical membrane-spanning segments follow: residues 70-90 (MLVNFLPTGTLLMFEMVLPTI), 98-118 (GINTLMIHLLLLLCAMSCFFF), 174-194 (VNDFVHSVMSVLVFMAIAFSD), and 212-232 (VMESFPLMVGIVCSALFLVFP).

It belongs to the plant DMP1 protein family. In terms of tissue distribution, restricted to flowers.

Its subcellular location is the endoplasmic reticulum membrane. The protein resides in the vacuole membrane. Functionally, involved in membrane remodeling. This Arabidopsis thaliana (Mouse-ear cress) protein is Protein DMP8.